The sequence spans 255 residues: Taurine import ATP-binding protein TauB (255 aa).

An ABC transporter domain is found at 2-229 (LQISHLYADY…RFVAGESSRS (228 aa)). 34–41 (GPSGCGKT) is a binding site for ATP.

This sequence belongs to the ABC transporter superfamily. Taurine importer (TC 3.A.1.17.1) family. In terms of assembly, the complex is composed of two ATP-binding proteins (TauB), two transmembrane proteins (TauC) and a solute-binding protein (TauA).

It localises to the cell inner membrane. The enzyme catalyses taurine(out) + ATP + H2O = taurine(in) + ADP + phosphate + H(+). In terms of biological role, part of the ABC transporter complex TauABC involved in taurine import. Responsible for energy coupling to the transport system. The polypeptide is Taurine import ATP-binding protein TauB (Escherichia coli O6:K15:H31 (strain 536 / UPEC)).